The following is a 670-amino-acid chain: WD repeat-containing protein 48 homolog (670 aa).

WD repeat units lie at residues 13–52 (RHRNGVNALQLDPVNGRLYSAGRDAIIRVWNSTQTSSQEP), 59–98 (HHNDWVNDIVLCCGGRNLISASCDTTVKVWNAHKGFCMST), 101–140 (THRDYVQALAYAKDREQVASAGLDKAIFLWDVNTLTALTA), 152–191 (GSKDSIYSLAMNPSGTIIVSGSTENTLRIWDPRTCNKIAK), 194–233 (GHTENVKALVVSEDGTQVVSGSSDGKIKLWSIGQQRCIQT), 236–275 (VHSEGVWALLMTDNFSHVISGSRDKKIVMTELRNPTNSVL), and 278–317 (EERAPVLSLCYNIDQTGIWATTWNSDVRCWKLNKTDKLSN). The interval 321–348 (SSNSSINSGGGGDGTPVTNSASNATPAS) is disordered. The span at 338 to 348 (TNSASNATPAS) shows a compositional bias: low complexity. A WD 8 repeat occupies 359–398 (KGGAAIKKYHVLNDKRFMLTKDSEQNVAIYDVLKVKKVED). The span at 613–625 (GGGGGSSTGGGGN) shows a compositional bias: gly residues. The tract at residues 613 to 645 (GGGGGSSTGGGGNSNSSQNNSQSDANSEGSQVP) is disordered. A compositionally biased stretch (low complexity) spans 626–635 (SNSSQNNSQS).

The protein belongs to the WD repeat WDR48 family. Catalytic component of the Usp12-46 deubiquitylase complex consisting of Usp12-46, Wdr20 and Uaf1; regulatory subunit that, together wtih Wdr20, stabilizes Usp12-46. The Usp12-46 deubiquitylase complex associates with arr/arrow; the interaction leads to deubiquitination and stabilization of arr/arrow.

Regulatory component of the Usp12-46 deubiquitylase complex. activates deubiquitination by increasing the catalytic turnover without increasing the affinity of deubiquitinating enzymes for the substrate. The complex deubiquitylates the wg/wingless-signaling receptor arr/arrow, which stabilizes the receptor and increases its concentration at the cell surface; this enhances the sensitivity of cells to wg/wingless-signal stimulation. This increases the amplitude and spatial range of the signaling response to the wg/wingless morphogen gradient, facilitating the precise concentration-dependent regulation of its target genes. Together with Wdr20 and Usp12-46 required for wg/wingless-mediated signaling in the wing imaginal disc and for wg/wingless-dependent regulation of intestinal stem cell proliferation. The protein is WD repeat-containing protein 48 homolog of Culex quinquefasciatus (Southern house mosquito).